We begin with the raw amino-acid sequence, 220 residues long: GTP-binding nuclear protein GSP2/CNR2 (220 aa).

The residue at position 2 (S2) is an N-acetylserine. A Phosphoserine modification is found at S2. The 165-residue stretch at 10-174 (EVPTFKLVLV…LWLARKLAGN (165 aa)) folds into the Small GTPase Ran-type domain. 21-28 (DGGTGKTT) contacts GTP. The switch-I stretch occupies residues 40-48 (KKYIATIGV). Residues G71, 125 to 128 (NKVD), and 153 to 155 (SAK) contribute to the GTP site. The switch-II stretch occupies residues 71–87 (GQEKFGGLRDGYYINAQ).

Belongs to the small GTPase superfamily. Ran family. As to quaternary structure, found in a nuclear export complex with RanGTP, exportin and pre-miRNA.

Its subcellular location is the nucleus. In terms of biological role, GTP-binding protein involved in nucleocytoplasmic transport. Required for the import of protein into the nucleus and also for RNA export. Not essential for cell viability. This Saccharomyces cerevisiae (strain ATCC 204508 / S288c) (Baker's yeast) protein is GTP-binding nuclear protein GSP2/CNR2 (GSP2).